A 218-amino-acid chain; its full sequence is UPF0502 protein VS_II0353 (218 aa).

This sequence belongs to the UPF0502 family.

The polypeptide is UPF0502 protein VS_II0353 (Vibrio atlanticus (strain LGP32) (Vibrio splendidus (strain Mel32))).